A 342-amino-acid polypeptide reads, in one-letter code: L-threonine 3-dehydrogenase (342 aa).

Cysteine 38 serves as a coordination point for Zn(2+). Catalysis depends on charge relay system residues threonine 40 and histidine 43. Positions 63, 64, 93, 96, 99, and 107 each coordinate Zn(2+). NAD(+)-binding positions include isoleucine 175, aspartate 195, arginine 200, 262–264, and 286–287; these read LGI and IY.

The protein belongs to the zinc-containing alcohol dehydrogenase family. Homotetramer. It depends on Zn(2+) as a cofactor.

It localises to the cytoplasm. The enzyme catalyses L-threonine + NAD(+) = (2S)-2-amino-3-oxobutanoate + NADH + H(+). The protein operates within amino-acid degradation; L-threonine degradation via oxydo-reductase pathway; glycine from L-threonine: step 1/2. Catalyzes the NAD(+)-dependent oxidation of L-threonine to 2-amino-3-ketobutyrate. This Burkholderia ambifaria (strain MC40-6) protein is L-threonine 3-dehydrogenase.